The following is a 138-amino-acid chain: Putative pre-16S rRNA nuclease (138 aa).

Belongs to the YqgF nuclease family.

The protein resides in the cytoplasm. Could be a nuclease involved in processing of the 5'-end of pre-16S rRNA. The protein is Putative pre-16S rRNA nuclease of Flavobacterium johnsoniae (strain ATCC 17061 / DSM 2064 / JCM 8514 / BCRC 14874 / CCUG 350202 / NBRC 14942 / NCIMB 11054 / UW101) (Cytophaga johnsonae).